The primary structure comprises 409 residues: MVIRSLLQCRTWSKSDWLLASIGIVLIVYSFSLSFNSTSDSIPSVDRSDLVKLKLSSKAKERGAFCLDGSLPGYHFHKGSGSGSNSWLLYLEGGGGCRTIESCSARAMTRLGSSNFFEHEVPFFGVLSSDPSQNPDFFNWNRVMIRYCDGACFSGHPEAEFKNETRLFFRGQLIWEAIMDELLSMGMSHAKRAMLTGCSAGGLSTLIHCDYFRDHLPKDATVKCVSDGGYILNVLDVLGNPTMGSFFHDVVTLQSVDKSLDQNCVAKMEPSKCMFPQESLKNIRTPVFLVNTAYDYWQIQNGLVPDSPDLDERWKICRLNIQECDAAQMKVLHGFRSSLIDAIGEFHVNKEGGMFINSCNSHCQIRESWHSATSTRIENKTIAESVGDWYFNRKPVKLIDCPYPCNASC.

The N-terminal stretch at 1-32 (MVIRSLLQCRTWSKSDWLLASIGIVLIVYSFS) is a signal peptide. N-linked (GlcNAc...) asparagine glycans are attached at residues asparagine 36 and asparagine 163. Active-site charge relay system residues include serine 199, aspartate 295, and histidine 362. Residues asparagine 379 and asparagine 406 are each glycosylated (N-linked (GlcNAc...) asparagine).

This sequence belongs to the pectinacetylesterase family.

It is found in the secreted. The protein resides in the cell wall. In terms of biological role, hydrolyzes acetyl esters in homogalacturonan regions of pectin. In type I primary cell wall, galacturonic acid residues of pectin can be acetylated at the O-2 and O-3 positions. Decreasing the degree of acetylation of pectin gels in vitro alters their physical properties. The polypeptide is Pectin acetylesterase 4 (Arabidopsis thaliana (Mouse-ear cress)).